The chain runs to 609 residues: MGRTNTSDQLNAISDKNTKRKSLALDNEYHNNSSSEDDSSKIELSYTIPDNNNIISQETTTSVEDVLSLSSAPQNELRLRKQKSNNQDSPVDLNGVIVDVSKREKIFLKRKRQIDNKHGSDKSKYLSRFNDITFKAKSSTIFESDEFYKTDFFGMYVLFWLATAFAMVNNLIHTYFENSTPILQWTVVKVFKRDLFKVGLVDLAMYLSTYFAFFVQYACKNGYLSWKKVGWWLQAAFDGLFLFFWLWIASEYCLDFPWIAKVFLVLHSLVFIMKMHSYAFYNGYLWSIYKEGLYSEKYLDKLTNGKVTLPKGHTKNETEKVLQESIAFTKYELEYQSHATTENPDDHHVFDIDQTDKSIAKLQQEGLIKFPQNITLFNYFEYSMFPTLVYTLNFPRTKRIRWSYVFGKTFGIFGLIFLMILIAENNLYPIVLRCEIARKLPVSERIPQYFFLLMDMIPPFLMVYLFTFFLIWDAILNAIAELSKFADRDFYGPWWSCTDFSEFANQWNRCVHKFLLRHVYHSSISAFDVNKQSAAIITFLLSSLVHELVMYVIFGTLRGYLLLFQMSQIPLIIMSRSKFMKDKKVLGNIICWFGFISGPSIICTLYLVF.

Over residues 1–15 the composition is skewed to polar residues; it reads MGRTNTSDQLNAISD. The disordered stretch occupies residues 1–41; the sequence is MGRTNTSDQLNAISDKNTKRKSLALDNEYHNNSSSEDDSSK. 6 consecutive transmembrane segments (helical) span residues 152 to 172, 195 to 215, 229 to 249, 253 to 273, 402 to 422, and 451 to 471; these read FFGM…NNLI, LFKV…AFFV, VGWW…LWIA, CLDF…VFIM, WSYV…MILI, and FLLM…FFLI. The FYXDWWN motif motif lies at 490–496; sequence FYGPWWS. 2 helical membrane passes run 534 to 554 and 589 to 609; these read AAII…YVIF and IICW…YLVF. Residue His546 is part of the active site.

This sequence belongs to the membrane-bound acyltransferase family. Sterol o-acyltransferase subfamily.

It is found in the endoplasmic reticulum membrane. With respect to regulation, inhibited by the protoberberine derivative HWY-289 in a non-competitive manner. Inhibited by miconazole. Not inhibited by CI-976, polyoxin D, amphotericin B or nikkomycin Z. Its function is as follows. Sterol O-acyltransferase that catalyzes the formation of stery esters. The polypeptide is Sterol O-acyltransferase 2 (Candida albicans (Yeast)).